Here is a 464-residue protein sequence, read N- to C-terminus: NAD(P) transhydrogenase subunit beta (464 aa).

A run of 6 helical transmembrane segments spans residues 54–74 (VQAY…GTVI), 86–106 (LVAA…TGAL), 126–146 (VEMS…VIAF), 164–184 (HPLN…FAAT), 191–211 (FALM…IGGA), and 227–247 (AAAG…GALV). NADP(+)-binding positions include 316–317 (YG), 348–353 (VAGRMP), 390–394 (GANDV), 425–432 (KRSMASGY), and 451–452 (DA).

Belongs to the PNT beta subunit family. In terms of assembly, complex of an alpha and a beta chain; in Rhodospirillum, the alpha chain seems to be made of two subunits.

It localises to the cell inner membrane. The catalysed reaction is NAD(+) + NADPH + H(+)(in) = NADH + NADP(+) + H(+)(out). The transhydrogenation between NADH and NADP is coupled to respiration and ATP hydrolysis and functions as a proton pump across the membrane. The sequence is that of NAD(P) transhydrogenase subunit beta (pntB) from Rhodospirillum rubrum (strain ATCC 11170 / ATH 1.1.1 / DSM 467 / LMG 4362 / NCIMB 8255 / S1).